A 40-amino-acid polypeptide reads, in one-letter code: Photosystem II reaction center protein L (40 aa).

A helical transmembrane segment spans residues 19–39; it reads SLFLGLLLVFVLGILFSSYFF.

This sequence belongs to the PsbL family. In terms of assembly, PSII is composed of 1 copy each of membrane proteins PsbA, PsbB, PsbC, PsbD, PsbE, PsbF, PsbH, PsbI, PsbJ, PsbK, PsbL, PsbM, PsbT, PsbX, PsbY, PsbZ, Psb30/Ycf12, peripheral proteins PsbO, CyanoQ (PsbQ), PsbU, PsbV and a large number of cofactors. It forms dimeric complexes.

The protein resides in the cellular thylakoid membrane. Its function is as follows. One of the components of the core complex of photosystem II (PSII). PSII is a light-driven water:plastoquinone oxidoreductase that uses light energy to abstract electrons from H(2)O, generating O(2) and a proton gradient subsequently used for ATP formation. It consists of a core antenna complex that captures photons, and an electron transfer chain that converts photonic excitation into a charge separation. This subunit is found at the monomer-monomer interface and is required for correct PSII assembly and/or dimerization. In Synechococcus elongatus (strain ATCC 33912 / PCC 7942 / FACHB-805) (Anacystis nidulans R2), this protein is Photosystem II reaction center protein L.